The chain runs to 156 residues: Small ribosomal subunit protein uS7 (156 aa).

Belongs to the universal ribosomal protein uS7 family. As to quaternary structure, part of the 30S ribosomal subunit. Contacts proteins S9 and S11.

Functionally, one of the primary rRNA binding proteins, it binds directly to 16S rRNA where it nucleates assembly of the head domain of the 30S subunit. Is located at the subunit interface close to the decoding center, probably blocks exit of the E-site tRNA. The sequence is that of Small ribosomal subunit protein uS7 from Limosilactobacillus fermentum (strain NBRC 3956 / LMG 18251) (Lactobacillus fermentum).